A 705-amino-acid polypeptide reads, in one-letter code: Elongation factor G (705 aa).

Residues E8–L294 enclose the tr-type G domain. GTP contacts are provided by residues A17–T24, D92–H96, and N146–D149.

The protein belongs to the TRAFAC class translation factor GTPase superfamily. Classic translation factor GTPase family. EF-G/EF-2 subfamily.

The protein localises to the cytoplasm. In terms of biological role, catalyzes the GTP-dependent ribosomal translocation step during translation elongation. During this step, the ribosome changes from the pre-translocational (PRE) to the post-translocational (POST) state as the newly formed A-site-bound peptidyl-tRNA and P-site-bound deacylated tRNA move to the P and E sites, respectively. Catalyzes the coordinated movement of the two tRNA molecules, the mRNA and conformational changes in the ribosome. This is Elongation factor G from Cereibacter sphaeroides (strain ATCC 17023 / DSM 158 / JCM 6121 / CCUG 31486 / LMG 2827 / NBRC 12203 / NCIMB 8253 / ATH 2.4.1.) (Rhodobacter sphaeroides).